The primary structure comprises 667 residues: MDVLANPGPLKDIVLYDQEKHVSSAVWDGQERGALRCHEHTSKLGEWKLKPKQIELVERAGFGFLRRIPAISLDNPLISALVERWRRETNTFHFTVGEMTVTLEDIALLLGLGIDGKPVIGLTYTTCSAVCERYLGKSPASNSASGGMVKLSWLKDNFSECPDDASFEEVERRTRAYLLYLVGSTIFSTTTGNKVPVMYLPLFEDFDDAGTFAWGAAALAFLYRALGNASVKSQSTICGCLTLLQCWSYYHLNIGRPKLNREPIHDQFPFVLKWKGKQNGPTANRDVVFYRKALDVMKPTDVVWLPYENMNGGDMSDRMRKSLLLGRSKTMLISFDKAERHLPDRCRKQFDLFQDIPADVQRWVRKSRGVDGGVDLSNKMESELSEWEMRWENIVPDDVQGVDEADYMRWYLGITRKIVGRPISLSSEFQRTISNVRDILELAENFQIHDLDLERGNMISRIIGLAQDCLRDQVGVTATPETQQQIELGKRMRGKERVRRKGMGKRRKGIDPMEDYGGSEDESQFGPLVEVGQMHLPLSHTNSVYDGTHMYDAVTKVDDMELCDTIPQLPETQDIHKIEGSLLDDTDKFVEESKLQEEFDGEEPTESYDVKKEDKESKVEDDDAAKGFSDVSGEENANREEEDETEMGESVAESSSLDRRGENTVVA.

At Met-1 the chain carries N-acetylmethionine. Residues 492-508 (MRGKERVRRKGMGKRRK) are compositionally biased toward basic residues. Disordered regions lie at residues 492-523 (MRGK…EDES) and 594-667 (KLQE…TVVA). A compositionally biased stretch (acidic residues) spans 512–523 (PMEDYGGSEDES). Basic and acidic residues-rich tracts occupy residues 608–618 (YDVKKEDKESK) and 656–667 (SLDRRGENTVVA).

Expressed in root tips, the shoot apical meristem (SAM), leaves, mature flowers and embryos.

Its subcellular location is the nucleus. In terms of biological role, maybe required to maintain cell division activity in meristematic cells. The chain is Protein MAIN-LIKE 2 from Arabidopsis thaliana (Mouse-ear cress).